A 304-amino-acid chain; its full sequence is MHFNNKNKSLDCLNTKIWPSPAKINLFLSVTGIRKDGYHFIQTLFQFLNYGDYLIFNTTSDKKIKLINKIHGIRNENNLIIRAAKSLKDFMWKNKNHDTPGVKIFIKKYIPIGGGLGGGSSNAATTLIALNEHWKCKLSLNTLADLGLQIGIDIPVFIYGKSAFAEGIGEKLSLFQPKEKFYLIVIPPIKISTKLIFNKFILNKKSYLKSCNQYLKKPLKNDFEPMIRKNFIIIDNLINYLSKFSNFRLTGTGSCIFSEFDSECKAKEILYKLPNKIKGFVSKGTNISYLKEILKIRSNFNVLS.

Lys-23 is an active-site residue. An ATP-binding site is contributed by 111–121 (PIGGGLGGGSS). Asp-153 is a catalytic residue.

This sequence belongs to the GHMP kinase family. IspE subfamily. In terms of assembly, homodimer.

It catalyses the reaction 4-CDP-2-C-methyl-D-erythritol + ATP = 4-CDP-2-C-methyl-D-erythritol 2-phosphate + ADP + H(+). It functions in the pathway isoprenoid biosynthesis; isopentenyl diphosphate biosynthesis via DXP pathway; isopentenyl diphosphate from 1-deoxy-D-xylulose 5-phosphate: step 3/6. In terms of biological role, catalyzes the phosphorylation of the position 2 hydroxy group of 4-diphosphocytidyl-2C-methyl-D-erythritol. The polypeptide is 4-diphosphocytidyl-2-C-methyl-D-erythritol kinase (Wigglesworthia glossinidia brevipalpis).